Here is a 198-residue protein sequence, read N- to C-terminus: Shikimate kinase (198 aa).

Residue glycine 26–glutamine 31 coordinates ATP. Serine 30 contacts Mg(2+). 3 residues coordinate substrate: aspartate 48, arginine 72, and glycine 94. Residue arginine 132 coordinates ATP. Residue arginine 151 participates in substrate binding. Residue glutamine 167 coordinates ATP.

Belongs to the shikimate kinase family. As to quaternary structure, monomer. The cofactor is Mg(2+).

The protein resides in the cytoplasm. It carries out the reaction shikimate + ATP = 3-phosphoshikimate + ADP + H(+). Its pathway is metabolic intermediate biosynthesis; chorismate biosynthesis; chorismate from D-erythrose 4-phosphate and phosphoenolpyruvate: step 5/7. Functionally, catalyzes the specific phosphorylation of the 3-hydroxyl group of shikimic acid using ATP as a cosubstrate. The protein is Shikimate kinase of Prochlorococcus marinus (strain NATL2A).